Reading from the N-terminus, the 97-residue chain is Large ribosomal subunit protein bL27 (97 aa).

Positions 1–12 are excised as a propeptide; that stretch reads MLKMNLANLQLF. The interval 14 to 37 is disordered; sequence HKKGGGSTSNGRDSQAKRLGAKAA.

It belongs to the bacterial ribosomal protein bL27 family. The N-terminus is cleaved by ribosomal processing cysteine protease Prp.

The sequence is that of Large ribosomal subunit protein bL27 from Streptococcus agalactiae serotype III (strain NEM316).